A 390-amino-acid polypeptide reads, in one-letter code: Chorismate synthase 1 (390 aa).

Residues Arg39 and Arg45 each coordinate NADP(+). FMN-binding positions include 132 to 134 (RSS), 253 to 254 (NA), Gly298, 313 to 317 (KPIPT), and Arg339.

Belongs to the chorismate synthase family. As to quaternary structure, homotetramer. Requires FMNH2 as cofactor.

The enzyme catalyses 5-O-(1-carboxyvinyl)-3-phosphoshikimate = chorismate + phosphate. The protein operates within metabolic intermediate biosynthesis; chorismate biosynthesis; chorismate from D-erythrose 4-phosphate and phosphoenolpyruvate: step 7/7. Its function is as follows. Catalyzes the anti-1,4-elimination of the C-3 phosphate and the C-6 proR hydrogen from 5-enolpyruvylshikimate-3-phosphate (EPSP) to yield chorismate, which is the branch point compound that serves as the starting substrate for the three terminal pathways of aromatic amino acid biosynthesis. This reaction introduces a second double bond into the aromatic ring system. The protein is Chorismate synthase 1 of Bacillus anthracis.